Reading from the N-terminus, the 238-residue chain is Urease subunit alpha (238 aa).

A urease gamma region spans residues Met1–Ala102. Positions Asn103–Glu238 are urease beta.

The protein in the N-terminal section; belongs to the urease gamma subunit family. This sequence in the C-terminal section; belongs to the urease beta subunit family. In terms of assembly, heterohexamer of 3 UreA (alpha) and 3 UreB (beta) subunits. Four heterohexamers assemble to form a 16 nm dodecameric complex.

The enzyme catalyses urea + 2 H2O + H(+) = hydrogencarbonate + 2 NH4(+). It participates in nitrogen metabolism; urea degradation; CO(2) and NH(3) from urea (urease route): step 1/1. In Helicobacter pylori (strain J99 / ATCC 700824) (Campylobacter pylori J99), this protein is Urease subunit alpha.